Consider the following 311-residue polypeptide: Pyrimidine-specific ribonucleoside hydrolase RihA (311 aa).

Residue His240 is part of the active site.

Belongs to the IUNH family. RihA subfamily.

Its function is as follows. Hydrolyzes with equal efficiency cytidine or uridine to ribose and cytosine or uracil, respectively. In Escherichia coli (strain ATCC 8739 / DSM 1576 / NBRC 3972 / NCIMB 8545 / WDCM 00012 / Crooks), this protein is Pyrimidine-specific ribonucleoside hydrolase RihA.